A 54-amino-acid chain; its full sequence is Defensin-like protein 1 (54 aa).

4 disulfide bridges follow: cysteine 6-cysteine 54, cysteine 17-cysteine 39, cysteine 23-cysteine 48, and cysteine 27-cysteine 50.

This sequence belongs to the DEFL family.

It localises to the secreted. Possesses antifungal activity insensitive to inorganic cations. Causes germ tubes and hyphae to swell and form multiple hyphal buds. Binds to the plasma membrane of the fungus. Has no inhibitory effect on insect gut alpha-amylase. The chain is Defensin-like protein 1 from Heuchera sanguinea (Coralbells).